The chain runs to 356 residues: Cyclin-dependent kinase 5 activator 1 (356 aa).

2 disordered regions span residues 1–53 (MGAN…AKES) and 66–99 (IQPV…FTRN). 2 stretches are compositionally biased toward low complexity: residues 40-49 (SNTSSRSSSN) and 71-92 (SRRS…SSDS).

Belongs to the cyclin-dependent kinase 5 activator family. Heterodimer composed of a catalytic subunit cdk-5 and a regulatory subunit cdka-1. Interaction with cdka-1 is required for cdk-5 activation. In terms of tissue distribution, expressed in all classes of neurons in the ventral cord.

The protein resides in the cytoplasm. Its subcellular location is the cell projection. It localises to the dendrite. The protein localises to the axon. Activator of the kinase cdk-5. In several motor neurons, promotes the polarized trafficking of synaptic vesicles and dense-core vesicles. In the ventral nerve cord, regulates the synaptic localization of the glutamate receptor, glr-1. In DA motor neurons, regulates axonal transport of synaptic vesicle precursors by inhibiting dynein-mediated retrograde transport. Regulates the polarized distribution of dense-core vesicles in DB motor neurons. May regulate these processes in association with cdk-5. May also play a role in GABAergic synaptic vesicle localization in the ventral nerve cord. In Caenorhabditis elegans, this protein is Cyclin-dependent kinase 5 activator 1.